Reading from the N-terminus, the 419-residue chain is Dual specificity protein phosphatase 7 (419 aa).

The disordered stretch occupies residues 1–47 (MKNQLRGPPARAHMSTSGAAAAGGTRAGSEPGAGSGSGAGTGAGAAT). Residues 10 to 29 (ARAHMSTSGAAAAGGTRAGS) are compositionally biased toward low complexity. Over residues 31–47 (PGAGSGSGAGTGAGAAT) the composition is skewed to gly residues. The region spanning 68-187 (GGASLLLLDC…FQTEYSEHCE (120 aa)) is the Rhodanese domain. Residues 216–240 (CSDGESDRELPSSATESDGSPVPSS) form a disordered region. Positions 227–240 (SSATESDGSPVPSS) are enriched in polar residues. Residues 244-387 (FPVQILPYLY…LLDFERTLGL (144 aa)) form the Tyrosine-protein phosphatase domain. The active-site Phosphocysteine intermediate is the cysteine 331. 331–337 (CLAGISR) lines the substrate pocket.

Belongs to the protein-tyrosine phosphatase family. Non-receptor class dual specificity subfamily. As to quaternary structure, interacts with MAPK1/ERK2; the interaction enhances DUSP7 phosphatase activity. As to expression, strongly expressed in liver. Expressed at significantly higher levels in malignant hematopoietic cells than in corresponding non-malignant cells.

The protein localises to the cytoplasm. The catalysed reaction is O-phospho-L-tyrosyl-[protein] + H2O = L-tyrosyl-[protein] + phosphate. The enzyme catalyses O-phospho-L-seryl-[protein] + H2O = L-seryl-[protein] + phosphate. It carries out the reaction O-phospho-L-threonyl-[protein] + H2O = L-threonyl-[protein] + phosphate. With respect to regulation, strongly inhibited by sodium orthovanadate. Functionally, dual specificity protein phosphatase. Shows high activity towards MAPK1/ERK2. Also has lower activity towards MAPK14 and MAPK8. In arrested oocytes, plays a role in meiotic resumption. Promotes nuclear envelope breakdown and activation of the CDK1/Cyclin-B complex in oocytes, probably by dephosphorylating and inactivating the conventional protein kinase C (cPKC) isozyme PRKCB. May also inactivate PRKCA and/or PRKCG. Also important in oocytes for normal chromosome alignment on the metaphase plate and progression to anaphase, where it might regulate activity of the spindle-assembly checkpoint (SAC) complex. This is Dual specificity protein phosphatase 7 from Homo sapiens (Human).